A 7311-amino-acid polypeptide reads, in one-letter code: MAM and LDL-receptor class A domain-containing protein 2 (7311 aa).

MAM domains follow at residues 4-171 (AYCD…SCVT), 199-361 (LDCD…FCSP), 363-530 (KQCT…VCPP), 532-695 (GDCN…NCPV), 727-887 (YDCT…QCPV), 889-1050 (MQCS…ACPL), 1052-1220 (GDCT…RCRL), 1228-1392 (FDCN…SCPS), 1394-1557 (GMCS…SCPA), 1559-1722 (GDCS…NCIQ), 1755-1918 (NDCN…KCPS), 1920-2087 (TDCT…PCPL), 2089-2254 (GDCD…RCSV), 2274-2437 (NNCT…PCPP), 2439-2601 (TVCD…PCPP), and 2603-2771 (GSCD…YCVG). Residues 2461–2481 (WKRDSGGTPSAGTGPSRDHTT) form a disordered region. The segment covering 2466-2475 (GGTPSAGTGP) has biased composition (low complexity). P-type domains follow at residues 2771–2817 (GLCS…FYHP) and 2818–2862 (SACA…FHGP). 6 disulfide bridges follow: C2773–C2802, C2784–C2801, C2795–C2813, C2820–C2847, C2831–C2846, and C2841–C2858. MAM domains are found at residues 2883–3048 (WDCT…TCPP), 3050–3214 (RECD…PCPP), 3216–3384 (GSCD…FCPS), and 3429–3587 (GACT…NCTL). An LDL-receptor class A 1 domain is found at 3593 to 3628 (SCGQQHRCIRGSCIDRGRVCDYTDDCGDNSDEQNCY). Intrachain disulfides connect C3594–C3605, C3600–C3618, and C3612–C3627. One can recognise an MAM 21 domain in the interval 3632–3794 (YRCSFEKSLC…DLSMTSSCQS (163 aa)). 2 LDL-receptor class A domains span residues 3814 to 3850 (PCPRFQFKCSNGLCIDTWNVCNYRDDCGDGSDEVNCG) and 4016 to 4054 (SCISGEYRCTRGSCVLPSQLCDFSDDCGDMSDENPSTCA). Disulfide bonds link C3815–C3827, C3822–C3840, and C3834–C3849. Residues 3850 to 4011 (GSCSFEPGLC…DDVTFQGCAL (162 aa)) enclose the MAM 22 domain. Disulfide bonds link C4017–C4029, C4024–C4042, and C4036–C4053. The MAM 23 domain maps to 4058–4221 (ERCNFEQDLC…DVSFTPNCRP (164 aa)). Residues 4239 to 4276 (GCQPGKFKCANGGNCISVSKVCNFYSDCSGGSDEMNCP) form the LDL-receptor class A 4 domain. Cystine bridges form between C4240-C4253, C4247-C4266, and C4260-C4275. In terms of domain architecture, MAM 24 spans 4277 to 4438 (ATCNFQNSFC…DDVSFEHCAE (162 aa)). The LDL-receptor class A 5 domain maps to 4444 to 4483 (TCSGLSVFRCQSGHCIAMSGKCDFEPDCCDGSEETNIVCA). 3 disulfide bridges follow: C4445–C4458, C4453–C4471, and C4465–C4482. One can recognise an MAM 25 domain in the interval 4486 to 4646 (NRCNFEAGLC…DISFTPDCVV (161 aa)). LDL-receptor class A domains follow at residues 4660-4699 (PTQPSCFNCRDGSACVNISKTCDFHNDCTDKSDEDADLCG) and 4859-4899 (YCSG…QSCS). 5 disulfide bridges follow: C4668/C4687, C4681/C4698, C4860/C4876, C4871/C4889, and C4883/C4898. The 163-residue stretch at 4700–4862 (WPCDFQRGTC…NNYTLTYCSG (163 aa)) folds into the MAM 26 domain. The 161-residue stretch at 4903–5063 (SRCTFENGLC…SIAMKPSCQQ (161 aa)) folds into the MAM 27 domain. One can recognise an LDL-receptor class A 8 domain in the interval 5085 to 5122 (NCVLPQVPCVSDGKCVSPSQVCDFNLDCADASDERSCP). Intrachain disulfides connect C5086–C5099, C5093–C5112, and C5106–C5121. One can recognise an MAM 28 domain in the interval 5123–5281 (HMCTFESDQC…DDIKFVDCAL (159 aa)). In terms of domain architecture, LDL-receptor class A 9 spans 5287–5322 (SCPSQFTCARNSCVSNDYVCDFNDDCGDGSDETLCG). 3 cysteine pairs are disulfide-bonded: C5288–C5299, C5294–C5312, and C5306–C5321. In terms of domain architecture, MAM 29 spans 5326-5489 (TRCDFSRGSC…DVSFTTGCKQ (164 aa)). Positions 5513 to 5552 (QCTTAEFNCFNQGSGACIPSTQVCNFQPNCNDGVDEQNCA) constitute an LDL-receptor class A 10 domain. Cystine bridges form between C5514-C5529, C5521-C5542, and C5536-C5551. The region spanning 5554 to 5719 (TKCSFDGGDF…DDIEFLNCVP (166 aa)) is the MAM 30 domain. The 39-residue stretch at 5725-5763 (KCTADEFQCARGGCIPKTSVCDFKADCMVGDVSDESSCS) folds into the LDL-receptor class A 11 domain. 3 disulfides stabilise this stretch: C5726–C5738, C5733–C5751, and C5745–C5762. Residues 5768–5935 (GQCDFEHGLC…LTPGCQICTD (168 aa)) form the MAM 31 domain. Positions 5957–5993 (PCSLQQYVCKNLRCVDKAQICNFKDDCGDNSDELPCG) constitute an LDL-receptor class A 12 domain. Intrachain disulfides connect C5958-C5970, C5965-C5983, and C5977-C5992. The 163-residue stretch at 5994–6156 (SNCTFEGDCY…DISFTDNCFV (163 aa)) folds into the MAM 32 domain. A disordered region spans residues 6014-6034 (NFHWRRRNGKTPSVGTGPTND). The span at 6023–6034 (KTPSVGTGPTND) shows a compositional bias: polar residues. The region spanning 6161-6200 (TCTPNEVKCRTSGHCVAEQRVCDHVKDCNDGTDEDALICS) is the LDL-receptor class A 13 domain. 3 disulfide bridges follow: C6162-C6175, C6169-C6188, and C6182-C6199. Residues 6204–6365 (ASCDFDVNWC…DISFSAGCYK (162 aa)) form the MAM 33 domain. One can recognise an LDL-receptor class A 14 domain in the interval 6377 to 6414 (RCSKVQFYCKADDLCINIHWKCDGEKDCTDGADEMLCP). 3 disulfide bridges follow: C6378–C6391, C6385–C6404, and C6398–C6413. MAM domains follow at residues 6430–6590 (ANCN…NCAK), 6606–6779 (LDED…NCDF), 6808–6965 (GDCT…QCQF), and 7173–7311 (GSCN…YNNL).

As to expression, component of the acid-insoluble and acid-soluble organic matrix of the aragonitic skeleton (at protein level).

It is found in the secreted. In Acropora millepora (Staghorn coral), this protein is MAM and LDL-receptor class A domain-containing protein 2.